The primary structure comprises 898 residues: MRPMRIFVNDDRHVMAKHSSVYPTQEELEAVQNMVSHTERALKAVSDWIDEQEKGNSELSEAENMDTPPDDESKEGAGEQKAEHMTRTLRGVMRVGLVAKGLLLKGDLDLELVLLCKEKPTTALLDKVADNLAIQLTTVTEDKYEILQSVDDAAIVIKNTKEPPLSLTIHLTSPVVREEMEKVLAGETLSVNDPPDVLDRQKCLAALASLRHAKWFQARANGLKSCVIVIRVLRDLCTRVPTWGPLRGWPLELLCEKSIGTANRPMGAGEALRRVLECLASGIVMPDGSGIYDPCEKEATDAIGHLDRQQREDITQSAQHALRLAAFGQLHKVLGMDPLPSKMPKKPKNENPVDYTVQIPPSTTYAITPMKRPMEEDGEEKSPSKKKKKIQKKEEKADPPQAMNALMRLNQLKPGLQYKLISQTGPVHAPIFTMSVEVDGSNFEASGPSKKTAKLHVAVKVLQDMGLPTGAEGRDSSKGEDSAEESDGKPAIVAPPPVVEAVSNPSSVFPSDATTEQGPILTKHGKNPVMELNEKRRGLKYELISETGGSHDKRFVMEVEVDGQKFQGAGSNKKVAKAYAALAALEKLFPDTPLALEANKKKRTPVPVRGGPKFAAKPHNPGFGMGGPMHNEVPPPPNIRGRGRGGNIRGRGRGRGFGGANHGGGYMNAGAGYGSYGYSSNSATAGYSQFYSNGGHSGNAGGGGSGGGGGSSSYSSYYQGDSYNSPVPPKHAGKKPLHGGQQKASYSSGYQSHQGQQQPYNQSQYSSYGTPQGKQKGYGHGQGSYSSYSNSYNSPGGGGGSDYSYDSKFNYSGSGGRSGGNSYGSSGSSSYNTGSHGGYGTGSGGSSSYQGKQGGYSSQSNYSSPGSSQSYSGPASSYQSSQGGYSRNTEHSMNYQYR.

The region spanning 5 to 378 is the DZF domain; that stretch reads RIFVNDDRHV…PMKRPMEEDG (374 aa). The interval 52 to 85 is disordered; the sequence is QEKGNSELSEAENMDTPPDDESKEGAGEQKAEHM. The span at 60 to 73 shows a compositional bias: acidic residues; that stretch reads SEAENMDTPPDDES. T67 carries the phosphothreonine modification. Positions 74–85 are enriched in basic and acidic residues; that stretch reads KEGAGEQKAEHM. The residue at position 100 (K100) is an N6-acetyllysine. Position 188 is a phosphothreonine; by PKR (T188). At S190 the chain carries Phosphoserine. Residue K297 forms a Glycyl lysine isopeptide (Lys-Gly) (interchain with G-Cter in ubiquitin) linkage. T315 bears the Phosphothreonine; by PKR mark. K348 is covalently cross-linked (Glycyl lysine isopeptide (Lys-Gly) (interchain with G-Cter in SUMO1)). The disordered stretch occupies residues 363-402; sequence TTYAITPMKRPMEEDGEEKSPSKKKKKIQKKEEKADPPQA. Positions 371–389 match the Bipartite nuclear localization signal motif; sequence KRPMEEDGEEKSPSKKKKK. Positions 372–383 are enriched in basic and acidic residues; that stretch reads RPMEEDGEEKSP. Phosphoserine is present on residues S382 and S384. Residue K396 forms a Glycyl lysine isopeptide (Lys-Gly) (interchain with G-Cter in SUMO2) linkage. Residues 398-467 enclose the DRBM 1 domain; the sequence is DPPQAMNALM…AVKVLQDMGL (70 aa). K460 bears the N6-acetyllysine mark. Disordered regions lie at residues 466-495 and 505-524; these read GLPT…IVAP and PSSV…LTKH. A compositionally biased stretch (basic and acidic residues) spans 472-481; it reads EGRDSSKGED. A phosphoserine mark is found at S476, S477, S482, and S486. K489 participates in a covalent cross-link: Glycyl lysine isopeptide (Lys-Gly) (interchain with G-Cter in SUMO2). Residues 524–590 form the DRBM 2 domain; it reads HGKNPVMELN…ALAALEKLFP (67 aa). The residue at position 592 (T592) is a Phosphothreonine. The tract at residues 609-898 is interaction with PRMT1; the sequence is RGGPKFAAKP…TEHSMNYQYR (290 aa). 2 disordered regions span residues 631-661 and 719-898; these read NEVP…GGAN and QGDS…YQYR. Residues 644 to 661 show a composition bias toward gly residues; the sequence is RGGNIRGRGRGRGFGGAN. Low complexity-rich tracts occupy residues 745–769, 783–794, and 802–812; these read SYSS…SSYG, GSYSSYSNSYNS, and DYSYDSKFNYS. Phosphoserine occurs at positions 794, 812, 814, and 818. The segment covering 813–822 has biased composition (gly residues); the sequence is GSGGRSGGNS. The segment covering 823–834 has biased composition (low complexity); sequence YGSSGSSSYNTG. The span at 835 to 845 shows a compositional bias: gly residues; it reads SHGGYGTGSGG. Positions 846–886 are enriched in low complexity; the sequence is SSSYQGKQGGYSSQSNYSSPGSSQSYSGPASSYQSSQGGYS.

In terms of assembly, identified in a IGF2BP1-dependent mRNP granule complex containing untranslated mRNAs. Interacts with FUS and SMN. Interacts (via C-terminus) with PRMT1. Forms a complex with ILF2. Can also bind to PRKDC/XRCC7: this may stabilize the interaction of PRKDC/XRCC7 and the heterodimeric complex of XRCC6/KU70 and XRCC5/KU80. Forms a heteromeric complex with ZNF346 and ILF3. Found in a nuclear export complex with XPO5, ILF3, Ran and double-stranded RNA or double-stranded minihelix VA1 RNA. Found in a nuclear export complex with XPO5, RAN, ILF3, ZNF346 and double-stranded RNA. Interacts with XPO5 and ZNF346. Forms a complex with ILF2, YLPM1, KHDRBS1, RBMX, NCOA5 and PPP1CA. Interacts with AGO1 and AGO2. Interacts with DHX36; this interaction occurs in a RNA-dependent manner. Interacts with ELAVL1; this interaction occurs in a RNA-dependent manner. Interacts with HAVCR2; this interaction promotes ILF3 ubiquitination and subsequent degradation. In terms of processing, phosphorylated at Thr-188 and Thr-315 by PKR in response to RNA viruses. This phosphorylation results in the dissociation of ILF2 from the ILF2-ILF3 complex resulting in a cytoplasmic sequestration of ILF3 where it can bind to viral RNAs and impede viral replication. Methylated by protein arginine N-methyltransferase 1. In terms of tissue distribution, ubiquitous. Expressed at high levels in the thymus, testis, ovary and at lower levelss in the spleen.

The protein resides in the nucleus. It localises to the nucleolus. The protein localises to the cytoplasm. In terms of biological role, RNA-binding protein that plays an essential role in the biogenesis of circular RNAs (circRNAs) which are produced by back-splicing circularization of pre-mRNAs. Within the nucleus, promotes circRNAs processing by stabilizing the regulatory elements residing in the flanking introns of the circularized exons. Plays thereby a role in the back-splicing of a subset of circRNAs. As a consequence, participates in a wide range of transcriptional and post-transcriptional processes. Binds to poly-U elements and AU-rich elements (AREs) in the 3'-UTR of target mRNAs. Upon viral infection, ILF3 accumulates in the cytoplasm and participates in the innate antiviral response. Mechanistically, ILF3 becomes phosphorylated and activated by the double-stranded RNA-activated protein kinase/PKR which releases ILF3 from cellular mature circRNAs. In turn, unbound ILF3 molecules are able to interact with and thus inhibit viral mRNAs. The sequence is that of Interleukin enhancer-binding factor 3 (Ilf3) from Mus musculus (Mouse).